Here is a 179-residue protein sequence, read N- to C-terminus: MCTSGQIIGSLLVLSVLEIGLGVSSVAVGAVSFSLALREHKPQLGDSSPFLLCGICGILCAKKKSGLVMILFSACCICGLIGGILNFQFLRAVTKKTSSLYPLHLASMSLACIGIGGCTLSSWLTCRLASYEQRRMFSEREHSLHHSHEMAEKRLRAIEITDLPSCPVVPPTPELPTRK.

4 helical membrane passes run 11 to 31 (LLVLSVLEIGLGVSSVAVGAV), 44 to 61 (LGDSSPFLLCGICGILCA), 67 to 87 (LVMILFSACCICGLIGGILNF), and 100 to 120 (LYPLHLASMSLACIGIGGCTL).

It localises to the cytoplasm. Its subcellular location is the membrane. Its function is as follows. Acts as a tumor suppressor in lung cancer. Inhibits tumor cell growth by inhibiting cell proliferation and migration and promoting cell apoptosis. Inhibits metastasis of lung cancer by suppressing beta-catenin expression in the Wnt/beta-catenin signaling pathway. This Pongo abelii (Sumatran orangutan) protein is Transmembrane protein 196 (TMEM196).